The sequence spans 534 residues: Putative fimbrium tip subunit Fim1C (534 aa).

The signal sequence occupies residues 1 to 21 (MKQYKLMQVALLAILLFGWAG). C22 is lipidated: N-palmitoyl cysteine. A lipid anchor (S-diacylglycerol cysteine) is attached at C22. Positions 22-54 (CSQNEEEVPGNVRNGIVLNVTDTGIISNEPSTR) are excised as a propeptide.

This sequence belongs to the bacteroidetes fimbrillin superfamily. Mfa-like family. As to quaternary structure, may be part of the fimbrial tip.

Its subcellular location is the fimbrium. The protein localises to the cell outer membrane. Its function is as follows. Probably a component of the fimbrium tip. Fimbriae are filamentous appendages on the cell surface that mediate cell adhesion and biofilm formation. In Bacteroides ovatus (strain ATCC 8483 / DSM 1896 / JCM 5824 / BCRC 10623 / CCUG 4943 / NCTC 11153), this protein is Putative fimbrium tip subunit Fim1C.